We begin with the raw amino-acid sequence, 95 residues long: Aspartyl/glutamyl-tRNA(Asn/Gln) amidotransferase subunit C (95 aa).

Belongs to the GatC family. As to quaternary structure, heterotrimer of A, B and C subunits.

The enzyme catalyses L-glutamyl-tRNA(Gln) + L-glutamine + ATP + H2O = L-glutaminyl-tRNA(Gln) + L-glutamate + ADP + phosphate + H(+). It catalyses the reaction L-aspartyl-tRNA(Asn) + L-glutamine + ATP + H2O = L-asparaginyl-tRNA(Asn) + L-glutamate + ADP + phosphate + 2 H(+). Functionally, allows the formation of correctly charged Asn-tRNA(Asn) or Gln-tRNA(Gln) through the transamidation of misacylated Asp-tRNA(Asn) or Glu-tRNA(Gln) in organisms which lack either or both of asparaginyl-tRNA or glutaminyl-tRNA synthetases. The reaction takes place in the presence of glutamine and ATP through an activated phospho-Asp-tRNA(Asn) or phospho-Glu-tRNA(Gln). The polypeptide is Aspartyl/glutamyl-tRNA(Asn/Gln) amidotransferase subunit C (Dinoroseobacter shibae (strain DSM 16493 / NCIMB 14021 / DFL 12)).